Reading from the N-terminus, the 639-residue chain is 1-deoxy-D-xylulose-5-phosphate synthase (639 aa).

Thiamine diphosphate-binding positions include histidine 79 and 120-122 (GHS). Mg(2+) is bound at residue aspartate 151. Thiamine diphosphate contacts are provided by residues 152–153 (GG), asparagine 180, tyrosine 288, and glutamate 370. Residue asparagine 180 participates in Mg(2+) binding.

The protein belongs to the transketolase family. DXPS subfamily. As to quaternary structure, homodimer. Requires Mg(2+) as cofactor. Thiamine diphosphate serves as cofactor.

The catalysed reaction is D-glyceraldehyde 3-phosphate + pyruvate + H(+) = 1-deoxy-D-xylulose 5-phosphate + CO2. The protein operates within metabolic intermediate biosynthesis; 1-deoxy-D-xylulose 5-phosphate biosynthesis; 1-deoxy-D-xylulose 5-phosphate from D-glyceraldehyde 3-phosphate and pyruvate: step 1/1. Its function is as follows. Catalyzes the acyloin condensation reaction between C atoms 2 and 3 of pyruvate and glyceraldehyde 3-phosphate to yield 1-deoxy-D-xylulose-5-phosphate (DXP). The polypeptide is 1-deoxy-D-xylulose-5-phosphate synthase (Methylococcus capsulatus (strain ATCC 33009 / NCIMB 11132 / Bath)).